We begin with the raw amino-acid sequence, 487 residues long: Bifunctional protein GlmU (487 aa).

Residues 1-232 (MAVIVLAAGA…AAELAGVNDR (232 aa)) are pyrophosphorylase. Residues 6 to 9 (LAAG), lysine 20, glutamine 77, and 82 to 83 (GT) each bind UDP-N-acetyl-alpha-D-glucosamine. Residue aspartate 107 participates in Mg(2+) binding. UDP-N-acetyl-alpha-D-glucosamine-binding residues include glycine 142, glutamate 157, asparagine 172, and asparagine 230. A Mg(2+)-binding site is contributed by asparagine 230. Residues 233-253 (VQLAAAGAELNRRTVTAAMRG) form a linker region. The tract at residues 254-487 (GATIVDPATT…PTSTPQADQE (234 aa)) is N-acetyltransferase. UDP-N-acetyl-alpha-D-glucosamine is bound by residues arginine 335 and lysine 353. Residue histidine 365 is the Proton acceptor of the active site. UDP-N-acetyl-alpha-D-glucosamine is bound by residues tyrosine 368 and asparagine 379. Acetyl-CoA contacts are provided by residues alanine 382, 388 to 389 (NY), serine 407, and alanine 425. Residues 453–487 (AKKRPGTPAAEAGEAAAKRVAEGGSPTSTPQADQE) are disordered. Over residues 477 to 487 (SPTSTPQADQE) the composition is skewed to polar residues.

This sequence in the N-terminal section; belongs to the N-acetylglucosamine-1-phosphate uridyltransferase family. It in the C-terminal section; belongs to the transferase hexapeptide repeat family. As to quaternary structure, homotrimer. Mg(2+) is required as a cofactor.

Its subcellular location is the cytoplasm. It carries out the reaction alpha-D-glucosamine 1-phosphate + acetyl-CoA = N-acetyl-alpha-D-glucosamine 1-phosphate + CoA + H(+). The catalysed reaction is N-acetyl-alpha-D-glucosamine 1-phosphate + UTP + H(+) = UDP-N-acetyl-alpha-D-glucosamine + diphosphate. It participates in nucleotide-sugar biosynthesis; UDP-N-acetyl-alpha-D-glucosamine biosynthesis; N-acetyl-alpha-D-glucosamine 1-phosphate from alpha-D-glucosamine 6-phosphate (route II): step 2/2. The protein operates within nucleotide-sugar biosynthesis; UDP-N-acetyl-alpha-D-glucosamine biosynthesis; UDP-N-acetyl-alpha-D-glucosamine from N-acetyl-alpha-D-glucosamine 1-phosphate: step 1/1. Its pathway is bacterial outer membrane biogenesis; LPS lipid A biosynthesis. Its function is as follows. Catalyzes the last two sequential reactions in the de novo biosynthetic pathway for UDP-N-acetylglucosamine (UDP-GlcNAc). The C-terminal domain catalyzes the transfer of acetyl group from acetyl coenzyme A to glucosamine-1-phosphate (GlcN-1-P) to produce N-acetylglucosamine-1-phosphate (GlcNAc-1-P), which is converted into UDP-GlcNAc by the transfer of uridine 5-monophosphate (from uridine 5-triphosphate), a reaction catalyzed by the N-terminal domain. The protein is Bifunctional protein GlmU of Corynebacterium jeikeium (strain K411).